The sequence spans 652 residues: Neuroendocrine convertase 2 (652 aa).

A signal peptide spans 1 to 22; the sequence is MKNTHVDLICVFLSIFIGIGEA. Residues 23 to 107 constitute a propeptide that is removed on maturation; that stretch reads VDVYTNHFHV…QLKGYTRTKR (85 aa). Residues 136-481 form the Peptidase S8 domain; sequence QWYLKNTGQA…FGVLDAAEMV (346 aa). Residue Asn-167 is glycosylated (N-linked (GlcNAc...) asparagine). Catalysis depends on charge relay system residues Asp-174 and His-215. 2 disulfides stabilise this stretch: Cys-232/Cys-382 and Cys-324/Cys-354. The N-linked (GlcNAc...) asparagine glycan is linked to Asn-290. Ser-390 serves as the catalytic Charge relay system. N-linked (GlcNAc...) asparagine glycosylation is present at Asn-451. Residues 489-625 enclose the P/Homo B domain; it reads TSPPRYHCTA…ELMLHGTREA (137 aa). The cysteines at positions 496 and 522 are disulfide-linked. The interval 501–652 is required for ubiquitination-mediated degradation; it reads IDTPHEIPAD…TVQKAHKRSH (152 aa). A glycan (N-linked (GlcNAc...) asparagine) is linked at Asn-542.

This sequence belongs to the peptidase S8 family. Furin subfamily. Interacts (via C-terminus) with F-box protein fsn-1 (via SPRY domain); the interaction results in egl-3 proteasomal degradation. Ubiquitinated. Expressed in head and tail ganglia. Expressed in neurons including mechanosensory and motor neurons, and interneurons (at protein level). Expressed in the nerve ring, ventral nerve cord and intestine.

The protein localises to the cell projection. It is found in the axon. Its subcellular location is the cytoplasmic vesicle. It localises to the secretory vesicle lumen. The protein resides in the secreted. It catalyses the reaction Release of protein hormones and neuropeptides from their precursors, generally by hydrolysis of -Lys-Arg-|- bonds.. Its function is as follows. Serine endoprotease which cleaves preproteins at paired basic amino acids. Processes FMRFamide-like (flp) and neuropeptide-like protein (nlp) neuropeptides. Probably by processing flp-1 and flp-18, modulates the neuronal excitation-inhibition balance and thus the level of activity of the locomotor circuit. Regulates sensitivity to mechanosensory stimuli. By processing neuropeptides, modulates basal acetylcholine release at the ventral cord neuromuscular junctions. Probably by processing flp neuropeptides, regulates the turning step of male mating behavior. Cleaves pro-insulin-like proteins ins-3, ins-4 and ins-6 into their mature active forms. Together with convertase kpc-1, cleaves pro-insulin-like protein ins-18. By controlling ins-4 and ins-6 processing and thus the activation of the daf-2/InsR pathway, negatively modulates synapse development and synaptic transmission at neuromuscular junctions. Similarly, by controlling ins-4 and ins-6 processing, negatively regulates dauer formation under optimal environmental conditions. Under adverse environmental conditions, may promote dauer formation by processing ins-18, a daf-2/InsR antagonist. May cleave dense-core vesicle membrane protein ida-1. Involved in egg-laying, fat storage and locomotion. In Caenorhabditis elegans, this protein is Neuroendocrine convertase 2.